Consider the following 294-residue polypeptide: MKDRLQELKQRTKEIELSRDSHVSTTETEEQGVFLQQAVIYEREPVAERHLHEIQKLQESINNLADNVQKFGQQQKSLVASMRRFSLLKRESTITKEIKIQAEYINRSLNDLVKEVKKSEVENGPSSVVTRILKSQHAAMFRHFQQIMFIYNDTIAAKQEKCKTFILRQLEVAGKEMSEEDVNDMLHQGKWEVFNESLLTEINITKAQLSEIEQRHKELVNLENQIKDLRDLFIQISLLVEEQGESINNIEMTVNSTKEYVNNTKEKFGLAVKYKKRNPCRVLCCWCCPCCSSK.

A t-SNARE coiled-coil homology domain is found at 209–271; the sequence is LSEIEQRHKE…NNTKEKFGLA (63 aa).

This sequence belongs to the syntaxin family. As to quaternary structure, interacts with EGFR.

It localises to the cell membrane. Its subcellular location is the cytoplasm. Functionally, plays a role in endosomal trafficking of the epidermal growth factor receptor (EGFR). This is Syntaxin-19 (STX19) from Homo sapiens (Human).